A 149-amino-acid chain; its full sequence is uncharacterized protein (149 aa).

This is an uncharacterized protein from Methanocaldococcus jannaschii (strain ATCC 43067 / DSM 2661 / JAL-1 / JCM 10045 / NBRC 100440) (Methanococcus jannaschii).